A 1145-amino-acid chain; its full sequence is MNSNRAAAGPVEENVGTQASVGPCGFVYLYPGDTFPVEEASLLGNLHAGGEVFSLPLLSGLTVEADFHVNVKAVHKKLDPATVSVKASAYHREVIVFANAACFKPIFAGPGLEGLCAASRQLFGYAEFEERAGGAARPFELADLGHLLPGAESHIAGVVVTESFKERLYRGQLVVVESQIQSVRVGECDAFKVPLYDGELFAKSPCRENLRYFYHAGVSRYLFEAHYTSLAQALRVRDVPGLIGALERQSFHDQYKLPKVYECREFPATGHRGAGDCSLTIVDSVATELAVSYGLSFLEVPQEGTALLSYDKWPIFEGCETPEQRVEALTQFNAKQAVHVHSQLFSGNSVLYLARVQKQASNRGGGGENVYNSFFMGHGLACLAEPTQKENGLPSFPGVPASALSGSNYSLHHLAYAASFSPQMLARHCYYLQFAQHQKSSNNSGYNVPTYVGTAANTPMCELCRGSCPASCVNTLFYRLRDRFPPVVASVRRDPYVVTGVAGAYNDLDIAGNFANYRDKDEESNQSEEREKFTYWQVTQTVLERLSEAGICEGGEDVGDAIHNIGSFLKVFKEIDGIVDGEVARFINSMVKNNVNYRESIKSIHHIVQYVCNVYWQPPCPVFLNLYYRCVLAVVQDICLPTCMMYEQENPAVGVSPGEWLKMHYQTLWTNFKNSCIDKGVLTGTEYKVVHKDQFCDFFDVDSAARGEFVSCKTQVRISRALMMAPRVMKIKNRIIFSNSPGTESIQNAFVRGTPKGDSCVVSGPYMRFLSTYHSQLFPGAKISPLFLWHTFSKKRQLPVFPNVPRESVTELANYVEQNSRLHGETSIIDVVPENFYTYAKVRLNNALFRACGQTQFYATTIHCLTPKIQTVPAEEYPHALGARGVADVGEYLGAARELTVPTVQCTSRDNICEVGKCRPIVTLPLVVNKYTGVTGNSQIFQCANLGYFIGRGVDKNLIPDAGSFKKQGVSTSMRKRHVFMTPLSDHLLRRSVQGAAVAFEIEGVRRRVQQILSDGDNPHVIRDVVLQLVKSLGSECRSVSEYDLEYYMGQYYIFAGDVSERLQRLSDLGGDWSEEWALSVLGEEEDPLGGELEFEKVEDAECLGHPQQDEFALAPQAAAPQYSGSSSVAGKKRKANVILGDLDL.

Positions 1115–1145 are required for nuclear localization; that stretch reads APQAAAPQYSGSSSVAGKKRKANVILGDLDL.

Belongs to the herpesviridae major DNA-binding protein family. Homooligomers. Forms double-helical filaments necessary for the formation of replication compartments within the host nucleus. Interacts with the origin-binding protein. Interacts with the helicase primase complex; this interaction stimulates primer synthesis activity of the helicase-primase complex. Interacts with the DNA polymerase. Interacts with the alkaline exonuclease; this interaction increases its nuclease processivity.

It localises to the host nucleus. Plays several crucial roles in viral infection. Participates in the opening of the viral DNA origin to initiate replication by interacting with the origin-binding protein. May disrupt loops, hairpins and other secondary structures present on ssDNA to reduce and eliminate pausing of viral DNA polymerase at specific sites during elongation. Promotes viral DNA recombination by performing strand-transfer, characterized by the ability to transfer a DNA strand from a linear duplex to a complementary single-stranded DNA circle. Can also catalyze the renaturation of complementary single strands. Additionally, reorganizes the host cell nucleus, leading to the formation of prereplicative sites and replication compartments. This process is driven by the protein which can form double-helical filaments in the absence of DNA. The protein is Major DNA-binding protein of Equus caballus (Horse).